The primary structure comprises 140 residues: Large-conductance mechanosensitive channel (140 aa).

2 consecutive transmembrane segments (helical) span residues 16-36 (VIDL…VTAL) and 84-104 (INTV…VKLI).

This sequence belongs to the MscL family. As to quaternary structure, homopentamer.

Its subcellular location is the cell inner membrane. Functionally, channel that opens in response to stretch forces in the membrane lipid bilayer. May participate in the regulation of osmotic pressure changes within the cell. The polypeptide is Large-conductance mechanosensitive channel (Xanthomonas oryzae pv. oryzae (strain MAFF 311018)).